Consider the following 372-residue polypeptide: UDP-N-acetylglucosamine--N-acetylmuramyl-(pentapeptide) pyrophosphoryl-undecaprenol N-acetylglucosamine transferase (372 aa).

UDP-N-acetyl-alpha-D-glucosamine is bound by residues 15–17, N126, R169, S197, and Q299; that span reads TGG.

It belongs to the glycosyltransferase 28 family. MurG subfamily.

Its subcellular location is the cell inner membrane. The catalysed reaction is di-trans,octa-cis-undecaprenyl diphospho-N-acetyl-alpha-D-muramoyl-L-alanyl-D-glutamyl-meso-2,6-diaminopimeloyl-D-alanyl-D-alanine + UDP-N-acetyl-alpha-D-glucosamine = di-trans,octa-cis-undecaprenyl diphospho-[N-acetyl-alpha-D-glucosaminyl-(1-&gt;4)]-N-acetyl-alpha-D-muramoyl-L-alanyl-D-glutamyl-meso-2,6-diaminopimeloyl-D-alanyl-D-alanine + UDP + H(+). It functions in the pathway cell wall biogenesis; peptidoglycan biosynthesis. Its function is as follows. Cell wall formation. Catalyzes the transfer of a GlcNAc subunit on undecaprenyl-pyrophosphoryl-MurNAc-pentapeptide (lipid intermediate I) to form undecaprenyl-pyrophosphoryl-MurNAc-(pentapeptide)GlcNAc (lipid intermediate II). The protein is UDP-N-acetylglucosamine--N-acetylmuramyl-(pentapeptide) pyrophosphoryl-undecaprenol N-acetylglucosamine transferase of Methylobacterium sp. (strain 4-46).